Consider the following 634-residue polypeptide: Threonine--tRNA ligase (634 aa).

The TGS domain maps to 1–61 (MINIRFPDGS…NSNCELRLIT (61 aa)). Residues 241–532 (DHRKIGKVLD…LIEHYAGNLP (292 aa)) form a catalytic region. Residues Cys-332, His-383, and His-509 each contribute to the Zn(2+) site.

It belongs to the class-II aminoacyl-tRNA synthetase family. Homodimer. Requires Zn(2+) as cofactor.

It is found in the cytoplasm. It carries out the reaction tRNA(Thr) + L-threonine + ATP = L-threonyl-tRNA(Thr) + AMP + diphosphate + H(+). Functionally, catalyzes the attachment of threonine to tRNA(Thr) in a two-step reaction: L-threonine is first activated by ATP to form Thr-AMP and then transferred to the acceptor end of tRNA(Thr). Also edits incorrectly charged L-seryl-tRNA(Thr). This chain is Threonine--tRNA ligase, found in Francisella tularensis subsp. holarctica (strain OSU18).